The chain runs to 55 residues: Large ribosomal subunit protein bL33 (55 aa).

The protein belongs to the bacterial ribosomal protein bL33 family.

This Agrobacterium fabrum (strain C58 / ATCC 33970) (Agrobacterium tumefaciens (strain C58)) protein is Large ribosomal subunit protein bL33.